We begin with the raw amino-acid sequence, 232 residues long: 5'-methylthioadenosine/S-adenosylhomocysteine nucleosidase (232 aa).

Glu-12 acts as the Proton acceptor in catalysis. Substrate-binding positions include Gly-78, Ile-152, and 173 to 174; that span reads ME. Catalysis depends on Asp-197, which acts as the Proton donor.

It belongs to the PNP/UDP phosphorylase family. MtnN subfamily. Homodimer.

The catalysed reaction is S-adenosyl-L-homocysteine + H2O = S-(5-deoxy-D-ribos-5-yl)-L-homocysteine + adenine. It catalyses the reaction S-methyl-5'-thioadenosine + H2O = 5-(methylsulfanyl)-D-ribose + adenine. It carries out the reaction 5'-deoxyadenosine + H2O = 5-deoxy-D-ribose + adenine. The protein operates within amino-acid biosynthesis; L-methionine biosynthesis via salvage pathway; S-methyl-5-thio-alpha-D-ribose 1-phosphate from S-methyl-5'-thioadenosine (hydrolase route): step 1/2. Catalyzes the irreversible cleavage of the glycosidic bond in both 5'-methylthioadenosine (MTA) and S-adenosylhomocysteine (SAH/AdoHcy) to adenine and the corresponding thioribose, 5'-methylthioribose and S-ribosylhomocysteine, respectively. Also cleaves 5'-deoxyadenosine, a toxic by-product of radical S-adenosylmethionine (SAM) enzymes, into 5-deoxyribose and adenine. Thus, is required for in vivo function of the radical SAM enzymes biotin synthase and lipoic acid synthase, that are inhibited by 5'-deoxyadenosine accumulation. The chain is 5'-methylthioadenosine/S-adenosylhomocysteine nucleosidase from Shigella boydii serotype 4 (strain Sb227).